A 228-amino-acid chain; its full sequence is Aquaporin Z 1 (228 aa).

The next 2 helical transmembrane spans lie at 9–29 (FLGT…AAAF) and 34–54 (IGLL…AYAV). An NPA 1 motif is present at residues 63–65 (NPA). The next 3 helical transmembrane spans lie at 82–102 (VGYI…LYVI), 129–149 (LTAA…IILG), and 156–176 (PVGF…LVSI). Positions 184–186 (NPA) match the NPA 2 motif. A helical transmembrane segment spans residues 204–224 (WLFWVAPLIGAVIAGIVWKIV).

The protein belongs to the MIP/aquaporin (TC 1.A.8) family. Homotetramer.

It is found in the cell inner membrane. It catalyses the reaction H2O(in) = H2O(out). Its function is as follows. Channel that permits osmotically driven movement of water in both directions. It is involved in the osmoregulation and in the maintenance of cell turgor during volume expansion in rapidly growing cells. It mediates rapid entry or exit of water in response to abrupt changes in osmolarity. This is Aquaporin Z 1 from Rhizobium meliloti (strain 1021) (Ensifer meliloti).